The chain runs to 413 residues: Eukaryotic initiation factor 4A-7 (413 aa).

The Q motif signature appears at 40–68 (DSFDAMGLQENLLRGIYAYGFEKPSAIQQ). The 171-residue stretch at 71–241 (IVPFCKGLDV…RKFMNKPVRI (171 aa)) folds into the Helicase ATP-binding domain. Residue 84-91 (AQSGTGKT) participates in ATP binding. The short motif at 189-192 (DEAD) is the DEAD box element. The Helicase C-terminal domain maps to 252–413 (GIKQFYVNVD…ELPANVADLL (162 aa)).

The protein belongs to the DEAD box helicase family. eIF4A subfamily. EIF4F is a multi-subunit complex, the composition of which varies with external and internal environmental conditions. It is composed of at least EIF4A, EIF4E and EIF4G.

It catalyses the reaction ATP + H2O = ADP + phosphate + H(+). ATP-dependent RNA helicase which is a subunit of the eIF4F complex involved in cap recognition and is required for mRNA binding to ribosome. In the current model of translation initiation, eIF4A unwinds RNA secondary structures in the 5'-UTR of mRNAs which is necessary to allow efficient binding of the small ribosomal subunit, and subsequent scanning for the initiator codon. This is Eukaryotic initiation factor 4A-7 from Nicotiana tabacum (Common tobacco).